The chain runs to 504 residues: UDP-N-acetylmuramoylalanine--D-glutamate ligase (504 aa).

129 to 135 (GTNGKTT) contacts ATP.

Belongs to the MurCDEF family.

Its subcellular location is the cytoplasm. It catalyses the reaction UDP-N-acetyl-alpha-D-muramoyl-L-alanine + D-glutamate + ATP = UDP-N-acetyl-alpha-D-muramoyl-L-alanyl-D-glutamate + ADP + phosphate + H(+). The protein operates within cell wall biogenesis; peptidoglycan biosynthesis. Its function is as follows. Cell wall formation. Catalyzes the addition of glutamate to the nucleotide precursor UDP-N-acetylmuramoyl-L-alanine (UMA). This Burkholderia pseudomallei (strain 668) protein is UDP-N-acetylmuramoylalanine--D-glutamate ligase.